An 853-amino-acid chain; its full sequence is MICAL-like protein 1 (853 aa).

A Calponin-homology (CH) domain is found at 2 to 108; it reads AGPRGALLAW…YVSQYYNHFA (107 aa). Disordered stretches follow at residues 118 to 162 and 224 to 659; these read PRKG…TPSS and SGRS…FPLI. Residues 145-162 are compositionally biased toward polar residues; that stretch reads ECSSGSLSKQGSHRTPSS. The region spanning 162-224 is the LIM zinc-binding domain; sequence STCAACQQHV…AEHCARLGPS (63 aa). Serine 292 and serine 306 each carry phosphoserine. Phosphothreonine is present on residues threonine 312 and threonine 315. Positions 355–366 are enriched in basic and acidic residues; it reads LSERTPAPRKDP. Positions 381 to 394 are enriched in pro residues; the sequence is APLPPSSSPGPPPG. The residue at position 388 (serine 388) is a Phosphoserine. The short motif at 419–421 is the NPF1 element; sequence NPF. The span at 429-445 shows a compositional bias: pro residues; that stretch reads PAAPSPAPGPAPTPPES. Phosphothreonine occurs at positions 457 and 459. Phosphoserine is present on residues serine 460, serine 461, serine 474, and serine 476. Composition is skewed to low complexity over residues 495–515 and 541–553; these read PSPA…APSE and SASL…LSSS. Residues serine 568 and serine 611 each carry the phosphoserine modification. Polar residues predominate over residues 607–618; the sequence is PGTSSPQLQVKS. An NPF2 motif is present at residues 623 to 625; that stretch reads NPF. Positions 642–853 are mediates the interaction with RAB13 and RAB35 and intramolecular interaction with the CH domain; it reads KGSKPARPPA…TKSKCPGDRS (212 aa). The region spanning 661–808 is the bMERB domain; the sequence is RKVQSDQYIP…EEEEDKMLEA (148 aa). Positions 671–701 form a coiled coil; sequence EEDIHGEIDTIERQLDALEHRGVLLEEKLRG. The interval 690 to 853 is necessary and sufficient to associate with tubular recycling endosome membranes, mediate phosphatidic acid-binding and membrane tubulation; sequence HRGVLLEEKL…TKSKCPGDRS (164 aa). Serine 730 carries the phosphoserine modification. Residues 791–820 are a coiled coil; the sequence is CLDEDRQREEEEDKMLEAMIKKKEFQKETE.

As to quaternary structure, homooligomer. Interacts (via NPF1 motif) with EHD1 (via EH domain); the interaction is direct and probably recruits EHD1 to membranes. Interacts with EHD3 (via EH domain). Interacts with RAB35 (GTP-bound form); the interaction is direct and probably recruits MICALL1 to membranes. Interacts with ACAP2; the interaction is indirect through RAB35. Interacts with RAB8A (GTP-bound form); regulates RAB8A association with recycling endosomes. Interacts with RAB13 (GTP-bound form). Interacts with ARF6 (GTP-bound form). Interacts with PACSIN2 (via the SH3 domain). Interacts with DPYSL2.

It is found in the recycling endosome membrane. The protein resides in the late endosome membrane. The protein localises to the cell projection. Its subcellular location is the cilium membrane. It localises to the cytoplasm. It is found in the cytoskeleton. The protein resides in the microtubule organizing center. The protein localises to the centrosome. Its subcellular location is the centriole. In terms of biological role, lipid-binding protein with higher affinity for phosphatidic acid, a lipid enriched in recycling endosome membranes. On endosome membranes, acts as a downstream effector of Rab proteins recruiting cytosolic proteins to regulate membrane tubulation. Involved in a late step of receptor-mediated endocytosis regulating for instance endocytosed-EGF receptor trafficking. Alternatively, regulates slow endocytic recycling of endocytosed proteins back to the plasma membrane. Also involved in cargo protein delivery to the plasma membrane. Plays a role in ciliogenesis coordination, recruits EHD1 to primary cilium where it is anchored to the centriole through interaction with tubulins. May indirectly play a role in neurite outgrowth. The polypeptide is MICAL-like protein 1 (MICALL1) (Bos taurus (Bovine)).